Consider the following 400-residue polypeptide: S-adenosylmethionine synthase (400 aa).

136 to 141 (GTGSTD) contacts ATP.

The protein belongs to the AdoMet synthase 2 family. Mg(2+) is required as a cofactor.

The enzyme catalyses L-methionine + ATP + H2O = S-adenosyl-L-methionine + phosphate + diphosphate. Its pathway is amino-acid biosynthesis; S-adenosyl-L-methionine biosynthesis; S-adenosyl-L-methionine from L-methionine: step 1/1. In terms of biological role, catalyzes the formation of S-adenosylmethionine from methionine and ATP. This chain is S-adenosylmethionine synthase, found in Methanoregula boonei (strain DSM 21154 / JCM 14090 / 6A8).